We begin with the raw amino-acid sequence, 841 residues long: Homeobox-leucine zipper protein ATHB-9 (841 aa).

Over residues 1–18 the composition is skewed to basic and acidic residues; the sequence is MMAHHSMDDRDSPDKGFD. The disordered stretch occupies residues 1-21; sequence MMAHHSMDDRDSPDKGFDSGK. Residues 18–81 constitute a DNA-binding region (homeobox); it reads DSGKYVRYTP…NRRCREKQRK (64 aa). Positions 85–118 form a coiled coil; sequence RLQTVNRKLSAMNKLLMEENDRLQKQVSNLVYEN. Disordered stretches follow at residues 140–162 and 602–630; these read VVVS…RDVN and DQKT…TKTD. A compositionally biased stretch (low complexity) spans 145-155; that stretch reads QQRQQQNPTHQ. In terms of domain architecture, START spans 160–388; it reads DVNNPANLLS…IAQETSGEVQ (229 aa). The span at 603 to 614 shows a compositional bias: polar residues; sequence QKTNPNDHQSAS.

It belongs to the HD-ZIP homeobox family. Class III subfamily. Binds DNA as homodimer. Interacts with ESR1 and ESR2. Interacts with ZPR3.

It localises to the nucleus. In terms of biological role, probable transcription factor involved in the determination of adaxial-abaxial polarity in ovule primordium. Specifies adaxial leaf fates. Binds to the DNA sequence 5'-GTAAT[GC]ATTAC-3'. The sequence is that of Homeobox-leucine zipper protein ATHB-9 (ATHB-9) from Arabidopsis thaliana (Mouse-ear cress).